We begin with the raw amino-acid sequence, 211 residues long: Outer surface protein C (211 aa).

The first 18 residues, 1–18 (MKKNTLSAILMTLFLFIS), serve as a signal peptide directing secretion. C19 carries N-palmitoyl cysteine lipidation. The S-diacylglycerol cysteine moiety is linked to residue C19.

The protein belongs to the OspC lipoprotein family. Homodimer. Interacts with tick I.ricinus salivary protein Iric-1, Iric-2 and Iric-3. Binds human (host) plasminogen.

It is found in the cell outer membrane. The protein localises to the cell surface. In terms of biological role, major immunodominant protein in mammalian hosts. Required for initial stages of mammalian infection. Inhibits macrophage-mediated phagocytosis of the bacteria. Binds human plasminogen; this probably confers an extracellular protease activity on the bacteria that allows it to traverse tissue. Interaction with tick I.ricinus salivary protein Salp15 protects the bacteria from antibody-mediated killing in vitro and in vivo. In Borreliella burgdorferi (Lyme disease spirochete), this protein is Outer surface protein C.